Here is a 91-residue protein sequence, read N- to C-terminus: Large ribosomal subunit protein eL31 (91 aa).

The protein belongs to the eukaryotic ribosomal protein eL31 family.

This chain is Large ribosomal subunit protein eL31, found in Pyrobaculum calidifontis (strain DSM 21063 / JCM 11548 / VA1).